The primary structure comprises 233 residues: 2,3,4,5-tetrahydropyridine-2,6-dicarboxylate N-acetyltransferase (233 aa).

It belongs to the transferase hexapeptide repeat family. DapH subfamily.

It catalyses the reaction (S)-2,3,4,5-tetrahydrodipicolinate + acetyl-CoA + H2O = L-2-acetamido-6-oxoheptanedioate + CoA. It participates in amino-acid biosynthesis; L-lysine biosynthesis via DAP pathway; LL-2,6-diaminopimelate from (S)-tetrahydrodipicolinate (acetylase route): step 1/3. In terms of biological role, catalyzes the transfer of an acetyl group from acetyl-CoA to tetrahydrodipicolinate. The polypeptide is 2,3,4,5-tetrahydropyridine-2,6-dicarboxylate N-acetyltransferase (Thermotoga sp. (strain RQ2)).